Consider the following 229-residue polypeptide: Acidic leucine-rich nuclear phosphoprotein 32-related protein 1 (229 aa).

LRR repeat units follow at residues 19–40 (TVDTLFLDNAEDGQIGGLTDQL), 42–63 (NLEMLSMVKCGLTTLAGFPTLP), 64–85 (ALTYLDISDNQLGDNASFDVLV), and 90–110 (DLKKITLASNKLSLDNLRCLK). The LRRCT domain maps to 124–164 (PSLGLLEDYREKMFEMIPSLKILDGCDVDGEEVEEEFAGEG). Over residues 155 to 177 (EVEEEFAGEGGEDSEEGSGDEDG) the composition is skewed to acidic residues. Residues 155–229 (EVEEEFAGEG…DNKKAAGDDE (75 aa)) form a disordered region. A compositionally biased stretch (basic and acidic residues) spans 219 to 229 (PDNKKAAGDDE).

This sequence belongs to the ANP32 family.

In Caenorhabditis elegans, this protein is Acidic leucine-rich nuclear phosphoprotein 32-related protein 1.